Consider the following 151-residue polypeptide: Small ribosomal subunit protein uS15z (151 aa).

This sequence belongs to the universal ribosomal protein uS15 family.

The polypeptide is Small ribosomal subunit protein uS15z (Oryza sativa subsp. japonica (Rice)).